Reading from the N-terminus, the 292-residue chain is Alpha-soluble NSF attachment protein (292 aa).

Ser-2 carries the post-translational modification N-acetylserine. A Glycyl lysine isopeptide (Lys-Gly) (interchain with G-Cter in ubiquitin) cross-link involves residue Lys-261.

This sequence belongs to the SNAP family. Binds to vacuolar cis-SNARE complexes composed of the v-SNAREs NYV1, VTI1 and YKT6, and the t-SNAREs VAM3 and VAM7. Interacts with SEC18.

The protein localises to the membrane. In terms of biological role, SNARE complex protein that binds to cis-SNARE complexes on membranes and is required for vesicular transport between the endoplasmic reticulum and the Golgi apparatus and for homotypic vacuole fusion. During the priming step of membrane fusion, is released from cis-SNARE complexes by SEC18 to establish a pool of unpaired SNAREs, which are required for interactions in trans during docking and fusion steps. Can displace HOPS from SNARE complexes, which may be a prerequisite for trans-SNARE complex disassembly and subsequent rounds of priming, docking and fusion. In Saccharomyces cerevisiae (strain ATCC 204508 / S288c) (Baker's yeast), this protein is Alpha-soluble NSF attachment protein (SEC17).